The primary structure comprises 282 residues: Shikimate dehydrogenase (NADP(+)) (282 aa).

Residues serine 15–serine 17 and threonine 62 contribute to the shikimate site. Lysine 66 acts as the Proton acceptor in catalysis. Residues asparagine 87 and aspartate 103 each contribute to the shikimate site. NADP(+) contacts are provided by residues glycine 127 to alanine 131, asparagine 151 to lysine 156, and methionine 220. A shikimate-binding site is contributed by tyrosine 222. An NADP(+)-binding site is contributed by glycine 244.

This sequence belongs to the shikimate dehydrogenase family. As to quaternary structure, homodimer.

The catalysed reaction is shikimate + NADP(+) = 3-dehydroshikimate + NADPH + H(+). Its pathway is metabolic intermediate biosynthesis; chorismate biosynthesis; chorismate from D-erythrose 4-phosphate and phosphoenolpyruvate: step 4/7. In terms of biological role, involved in the biosynthesis of the chorismate, which leads to the biosynthesis of aromatic amino acids. Catalyzes the reversible NADPH linked reduction of 3-dehydroshikimate (DHSA) to yield shikimate (SA). In Shewanella baltica (strain OS223), this protein is Shikimate dehydrogenase (NADP(+)).